The primary structure comprises 324 residues: Phospho-N-acetylmuramoyl-pentapeptide-transferase (324 aa).

The next 10 membrane-spanning stretches (helical) occupy residues glycine 5–isoleucine 25, proline 52–isoleucine 72, leucine 77–leucine 97, leucine 117–aspartate 137, isoleucine 147–serine 167, leucine 176–valine 196, alanine 202–alanine 222, valine 227–leucine 247, leucine 253–isoleucine 273, and valine 302–valine 322.

It belongs to the glycosyltransferase 4 family. MraY subfamily. It depends on Mg(2+) as a cofactor.

It is found in the cell membrane. It catalyses the reaction UDP-N-acetyl-alpha-D-muramoyl-L-alanyl-gamma-D-glutamyl-meso-2,6-diaminopimeloyl-D-alanyl-D-alanine + di-trans,octa-cis-undecaprenyl phosphate = di-trans,octa-cis-undecaprenyl diphospho-N-acetyl-alpha-D-muramoyl-L-alanyl-D-glutamyl-meso-2,6-diaminopimeloyl-D-alanyl-D-alanine + UMP. Its pathway is cell wall biogenesis; peptidoglycan biosynthesis. Functionally, catalyzes the initial step of the lipid cycle reactions in the biosynthesis of the cell wall peptidoglycan: transfers peptidoglycan precursor phospho-MurNAc-pentapeptide from UDP-MurNAc-pentapeptide onto the lipid carrier undecaprenyl phosphate, yielding undecaprenyl-pyrophosphoryl-MurNAc-pentapeptide, known as lipid I. The sequence is that of Phospho-N-acetylmuramoyl-pentapeptide-transferase from Bacillus cytotoxicus (strain DSM 22905 / CIP 110041 / 391-98 / NVH 391-98).